Consider the following 204-residue polypeptide: Quinol oxidase subunit 3 (204 aa).

A run of 6 helical transmembrane segments spans residues 27–47 (FWIF…TFFV), 66–86 (LVMI…IAVH), 95–115 (GVVI…GCEI), 118–138 (FVHY…SGFF), 140–160 (LLGT…GILI), and 184–204 (FLDV…LGGL).

It belongs to the cytochrome c oxidase subunit 3 family.

It localises to the cell membrane. It catalyses the reaction 2 a quinol + O2 = 2 a quinone + 2 H2O. Its function is as follows. Catalyzes quinol oxidation with the concomitant reduction of oxygen to water. Major component for energy conversion during vegetative growth. The protein is Quinol oxidase subunit 3 (qoxC) of Bacillus subtilis (strain 168).